The primary structure comprises 744 residues: CCR4-NOT transcription complex subunit 10 (744 aa).

Positions 1–16 are enriched in basic and acidic residues; the sequence is MAADKPADQGAEKHEG. Disordered stretches follow at residues 1–26, 183–204, 475–522, and 602–632; these read MAADKPADQGAEKHEGAGQSSGVTDQ, SGNKNGKSETGNNSSKDGSNPK, EQQD…PSSP, and VSLGISSNEQDQGSDKGENEAMESSGKRAPQ. A2 is subject to N-acetylalanine. Residues 183-200 show a composition bias toward polar residues; it reads SGNKNGKSETGNNSSKDG. Over residues 496 to 506 the composition is skewed to low complexity; sequence ESSESSETCSS. Polar residues predominate over residues 602–612; that stretch reads VSLGISSNEQD.

This sequence belongs to the CNOT10 family. Component of the CCR4-NOT complex; distinct complexes seem to exist that differ in the participation of probably mutually exclusive catalytic subunits. CNOT10 and CNOT11 form a subcomplex docked to the CNOT1 scaffold.

The protein resides in the cytoplasm. Its subcellular location is the nucleus. Its function is as follows. Component of the CCR4-NOT complex which is one of the major cellular mRNA deadenylases and is linked to various cellular processes including bulk mRNA degradation, miRNA-mediated repression, translational repression during translational initiation and general transcription regulation. Additional complex functions may be a consequence of its influence on mRNA expression. Is not required for association of CNOT7 to the CCR4-NOT complex. The polypeptide is CCR4-NOT transcription complex subunit 10 (Cnot10) (Rattus norvegicus (Rat)).